We begin with the raw amino-acid sequence, 464 residues long: ERO1-like protein alpha (464 aa).

The signal sequence occupies residues 1–23 (MGRGWGLLVGLLGVVWLLRSGQG). 8 cysteine pairs are disulfide-bonded: Cys-35–Cys-48, Cys-37–Cys-46, Cys-85–Cys-387, Cys-94–Cys-99, Cys-94–Cys-130, Cys-99–Cys-104, Cys-207–Cys-237, and Cys-390–Cys-393. Phosphoserine occurs at positions 106, 142, and 144. FAD is bound by residues Arg-186, Thr-188, and Trp-199. Ser-248 and His-251 together coordinate FAD. Asn-276 is a glycosylation site (N-linked (GlcNAc...) asparagine). Residues Arg-283 and Arg-296 each contribute to the FAD site. N-linked (GlcNAc...) asparagine glycosylation is present at Asn-380.

It belongs to the EROs family. As to quaternary structure, predominantly monomer. May function both as a monomer and a homodimer. Interacts with PDILT. Interacts with ERP44; the interaction results in retention of ERO1A in the endoplasmic reticulum. FAD serves as cofactor. N-glycosylated. Post-translationally, the Cys-94/Cys-99 and Cys-390/Cys-393 disulfide bonds constitute the redox-active center. The Cys-94/Cys-99 disulfide bond may accept electron from P4HB and funnel them to the active site disulfide Cys-390/Cys-393. The regulatory Cys-99/Cys-104 disulfide bond stabilizes the other regulatory bond Cys-94/Cys-130. In terms of processing, phosphorylated on Ser-144 by FAM20C in the Golgi which increases its enzymatic activity. Phosphorylation is induced by lactation. It is also induced by hypoxia and reductive stress.

The protein localises to the endoplasmic reticulum membrane. It localises to the golgi apparatus lumen. Its subcellular location is the secreted. It is found in the cell projection. The protein resides in the dendrite. With respect to regulation, enzyme activity is tightly regulated to prevent the accumulation of reactive oxygen species in the endoplasmic reticulum. Reversibly down-regulated by the formation of disulfide bonds between the active site Cys-94 and Cys-130, and between Cys-99 and Cys-104. Glutathione may be required to regulate its activity in the endoplasmic reticulum. In terms of biological role, oxidoreductase involved in disulfide bond formation in the endoplasmic reticulum. Efficiently reoxidizes P4HB/PDI, the enzyme catalyzing protein disulfide formation, in order to allow P4HB to sustain additional rounds of disulfide formation. Following P4HB reoxidation, passes its electrons to molecular oxygen via FAD, leading to the production of reactive oxygen species (ROS) in the cell. Required for the proper folding of immunoglobulins. Plays an important role in ER stress-induced, CHOP-dependent apoptosis by activating the inositol 1,4,5-trisphosphate receptor IP3R1. The protein is ERO1-like protein alpha of Rattus norvegicus (Rat).